Reading from the N-terminus, the 328-residue chain is Gonadotropin-releasing hormone receptor (328 aa).

The Extracellular portion of the chain corresponds to 1–38; sequence MANSDSPEQNENHCSAINSSIPLTPGSLPTLTLSGKIR. N-linked (GlcNAc...) asparagine glycosylation occurs at Asn-18. Residues 39 to 58 traverse the membrane as a helical segment; it reads VTVTFFLFLLSTIFNTSFLL. Over 59-77 the chain is Cytoplasmic; that stretch reads KLQNWTQRKEKRKKLSRMK. Residues 78-97 traverse the membrane as a helical segment; sequence LLLKHLTLANLLETLIVMPL. Residues 98–115 are Extracellular-facing; the sequence is DGMWNITVQWYAGELLCK. Asn-102 carries an N-linked (GlcNAc...) asparagine glycan. The cysteines at positions 114 and 196 are disulfide-linked. The chain crosses the membrane as a helical span at residues 116-137; it reads VLSYLKLFSMYAPAFMMVVISL. The Cytoplasmic segment spans residues 138-164; that stretch reads DRSLAITKPLAVKSNSKLGQFMIGLAW. The chain crosses the membrane as a helical span at residues 165-184; that stretch reads LLSSIFAGPQLYIFGMIHLA. At 185 to 212 the chain is on the extracellular side; the sequence is DDSGQTEGFSQCVTHCSFPQWWHQAFYN. Residues 213 to 232 traverse the membrane as a helical segment; sequence FFTFSCLFIIPLLIMVICNA. At 233 to 281 the chain is on the cytoplasmic side; sequence KIIFTLTRVLHQDPHKLQLNQSKNNIPRARLRTLKMTVAFATSFTVCWT. A helical membrane pass occupies residues 282–300; that stretch reads PYYVLGIWYWFDPDMVNRV. The Extracellular segment spans residues 301 to 306; that stretch reads SDPVNH. The chain crosses the membrane as a helical span at residues 307-326; that stretch reads FFFLFAFLNPCFDPLIYGYF. Topologically, residues 327 to 328 are cytoplasmic; it reads SL.

The protein belongs to the G-protein coupled receptor 1 family.

It localises to the cell membrane. Its function is as follows. Receptor for gonadotropin releasing hormone (GnRH) that mediates the action of GnRH to stimulate the secretion of the gonadotropic hormones luteinizing hormone (LH) and follicle-stimulating hormone (FSH). This receptor mediates its action by association with G-proteins that activate a phosphatidylinositol-calcium second messenger system. This chain is Gonadotropin-releasing hormone receptor (GNRHR), found in Bos taurus (Bovine).